The chain runs to 147 residues: Ribonuclease H (147 aa).

The RNase H type-1 domain occupies 1-142 (MKKVSIYTDG…CDKLATDEIK (142 aa)). 4 residues coordinate Mg(2+): D9, E47, D69, and D134.

This sequence belongs to the RNase H family. As to quaternary structure, monomer. Mg(2+) is required as a cofactor.

It is found in the cytoplasm. It carries out the reaction Endonucleolytic cleavage to 5'-phosphomonoester.. In terms of biological role, endonuclease that specifically degrades the RNA of RNA-DNA hybrids. The sequence is that of Ribonuclease H from Acetivibrio thermocellus (strain ATCC 27405 / DSM 1237 / JCM 9322 / NBRC 103400 / NCIMB 10682 / NRRL B-4536 / VPI 7372) (Clostridium thermocellum).